Consider the following 106-residue polypeptide: Programmed cell death activator egl-1 (106 aa).

The interval 73 to 81 (LAAMCDDFD) is BH3-like.

As to quaternary structure, interacts with ced-9; the interaction results in ced-4 release from the ced-4/ced-9 complex. Interaction with ced-9 may enhance interaction of ced-9 with drp-1, but not with ced-4. A ced-9/egl-1 complex may recruit drp-1 to the mitochondrial surface.

The protein localises to the synapse. Functionally, plays a major role in programmed cell death (PCD or apoptosis) by negatively regulating ced-9. Binds to and directly inhibits the activity of ced-9, releasing the cell death activator ced-4 from a ced-9/ced-4 containing protein complex and allowing ced-4 to activate the cell-killing caspase ced-3. Required to activate programmed cell death in the sister cells of the serotonergic neurosecretory motor (NSM) neurons during embryogenesis. Required to activate programmed cell death in the sister cells of the M4 motor neuron and I1 pharyngeal neuron during embryogenesis. During larval development, required for the elimination of transient presynaptic components upstream of ced-9, ced-4 and ced-3 apoptotic pathway. Together with ain-1, a component of the miRNA-induced-silencing complex (miRISC), and probably upstream of ced-3 and ced-4, regulates temporal cell fate patterning during larval development. Has been shown in two studies to be dispensable in mitochondrial dynamics and morphology during early embryonic development. However, one study shows that during larval development, egl-1 is involved in modulating mitochondrial dynamics, perhaps acting by stabilizing the interaction between ced-9 and drp-1 in order to promote mitochondrial fission. Involved in inducing mitochondrial fragmentation during apoptosis, probably acting via ced-9 and dynamin-related protein drp-1. This is Programmed cell death activator egl-1 from Caenorhabditis elegans.